The following is a 446-amino-acid chain: G patch domain-containing protein 4 (446 aa).

Methionine 1 bears the N-acetylmethionine mark. Position 4 is a phosphothreonine (threonine 4). Positions 11 to 57 (GMKFAEEQLLKHGWTQGKGLGRKENGITQALRVTLKQDTHGVGHDPA) constitute a G-patch domain. Residue lysine 46 forms a Glycyl lysine isopeptide (Lys-Gly) (interchain with G-Cter in SUMO2) linkage. Threonine 116 carries the phosphothreonine modification. Disordered stretches follow at residues 116–140 (TSGG…SKSP) and 188–446 (QDPG…KKRD). 3 positions are modified to phosphoserine: serine 128, serine 130, and serine 139. Positions 166–251 (TMKAKLARLE…KKKRRHQEGK (86 aa)) form a coiled coil. Positions 219-237 (ASERNDADEKHPEHAEQNI) are enriched in basic and acidic residues. The span at 238–248 (RKSKKKKRRHQ) shows a compositional bias: basic residues. 4 stretches are compositionally biased toward basic and acidic residues: residues 249 to 268 (EGKV…KEDA), 297 to 328 (HHEE…ESRA), 363 to 375 (REAE…DGRS), and 392 to 409 (LDVR…ESRA). Basic residues-rich tracts occupy residues 416–427 (RGKRKRQQHPKK) and 437–446 (KAKKKQKKRD).

This is G patch domain-containing protein 4 (GPATCH4) from Homo sapiens (Human).